A 588-amino-acid polypeptide reads, in one-letter code: L-fucose isomerase (588 aa).

Residues glutamate 335 and aspartate 359 each act as proton acceptor in the active site. 3 residues coordinate Mn(2+): glutamate 335, aspartate 359, and histidine 525.

The protein belongs to the L-fucose isomerase family. Mn(2+) serves as cofactor.

The protein localises to the cytoplasm. The catalysed reaction is L-fucose = L-fuculose. It functions in the pathway carbohydrate degradation; L-fucose degradation; L-lactaldehyde and glycerone phosphate from L-fucose: step 1/3. Functionally, converts the aldose L-fucose into the corresponding ketose L-fuculose. In Streptococcus pneumoniae (strain P1031), this protein is L-fucose isomerase.